The primary structure comprises 128 residues: Calcitonin gene-related peptide 1 (128 aa).

The first 25 residues, 1–25, serve as a signal peptide directing secretion; the sequence is MGLWKSSPFLAFSILVLCQAGGLQA. Residues 26–80 constitute a propeptide that is removed on maturation; that stretch reads APFRSALEGLPDPTALSEKEGRLLLAALVKAYVQRKNELEQEQEQETEGSSITAQ. A disordered region spans residues 63 to 83; it reads ELEQEQEQETEGSSITAQKRS. A compositionally biased stretch (polar residues) spans 74-83; that stretch reads GSSITAQKRS. Cys-84 and Cys-89 are joined by a disulfide. Phe-119 is subject to Phenylalanine amide. Positions 125–128 are excised as a propeptide; sequence DLRA.

The protein belongs to the calcitonin family.

It localises to the secreted. In terms of biological role, CGRP1/CALCA is a peptide hormone that induces vasodilation mediated by the CALCRL-RAMP1 receptor complex. Dilates a variety of vessels including the coronary, cerebral and systemic vasculature. Its abundance in the CNS also points toward a neurotransmitter or neuromodulator role. It also elevates platelet cAMP. CGRP1 can also bind and activate CALCR-RAMP1 (AMYR1) receptor complex. The polypeptide is Calcitonin gene-related peptide 1 (CALCA) (Canis lupus familiaris (Dog)).